The sequence spans 642 residues: Threonine--tRNA ligase (642 aa).

Residues 1 to 61 (MPVITLPDGS…ENDATLSIIT (61 aa)) form the TGS domain. Residues 243–534 (DHRKIGKQLD…LTEEFAGFFP (292 aa)) are catalytic. The Zn(2+) site is built by cysteine 334, histidine 385, and histidine 511.

It belongs to the class-II aminoacyl-tRNA synthetase family. As to quaternary structure, homodimer. Requires Zn(2+) as cofactor.

The protein resides in the cytoplasm. It catalyses the reaction tRNA(Thr) + L-threonine + ATP = L-threonyl-tRNA(Thr) + AMP + diphosphate + H(+). Catalyzes the attachment of threonine to tRNA(Thr) in a two-step reaction: L-threonine is first activated by ATP to form Thr-AMP and then transferred to the acceptor end of tRNA(Thr). Also edits incorrectly charged L-seryl-tRNA(Thr). In Salmonella agona (strain SL483), this protein is Threonine--tRNA ligase.